The chain runs to 520 residues: Putative hydrolase Mb2247c (520 aa).

Positions 1–34 are cleaved as a signal peptide; it reads MAAMWRRRPLSSALLSFGLLLGGLPLAAPPLAGA. A helical transmembrane segment spans residues 104–124; it reads FGALLVNPGGPGASAVDMVAA. The region spanning 105 to 403 is the AB hydrolase-1 domain; the sequence is GALLVNPGGP…APTPADPAAW (299 aa). The active-site Nucleophile is serine 232. Aspartate 461 is a catalytic residue. Histidine 488 acts as the Proton donor in catalysis.

It belongs to the peptidase S33 family.

It localises to the cell membrane. This Mycobacterium bovis (strain ATCC BAA-935 / AF2122/97) protein is Putative hydrolase Mb2247c.